We begin with the raw amino-acid sequence, 254 residues long: 4-hydroxy-tetrahydrodipicolinate reductase (254 aa).

NAD(+) contacts are provided by residues 8-13 (GASGKM), 87-89 (GTT), and 111-114 (ATNM). H143 (proton donor/acceptor) is an active-site residue. H144 serves as a coordination point for (S)-2,3,4,5-tetrahydrodipicolinate. Catalysis depends on K147, which acts as the Proton donor. Residue 153–154 (GT) coordinates (S)-2,3,4,5-tetrahydrodipicolinate.

It belongs to the DapB family.

It localises to the cytoplasm. The catalysed reaction is (S)-2,3,4,5-tetrahydrodipicolinate + NAD(+) + H2O = (2S,4S)-4-hydroxy-2,3,4,5-tetrahydrodipicolinate + NADH + H(+). The enzyme catalyses (S)-2,3,4,5-tetrahydrodipicolinate + NADP(+) + H2O = (2S,4S)-4-hydroxy-2,3,4,5-tetrahydrodipicolinate + NADPH + H(+). Its pathway is amino-acid biosynthesis; L-lysine biosynthesis via DAP pathway; (S)-tetrahydrodipicolinate from L-aspartate: step 4/4. Its function is as follows. Catalyzes the conversion of 4-hydroxy-tetrahydrodipicolinate (HTPA) to tetrahydrodipicolinate. The polypeptide is 4-hydroxy-tetrahydrodipicolinate reductase (Campylobacter curvus (strain 525.92)).